The chain runs to 199 residues: Guanylyl cyclase-activating protein 1 (199 aa).

Glycine 2 is lipidated: N-myristoyl glycine. Asparagine 3 carries the post-translational modification Deamidated asparagine. 4 consecutive EF-hand domains span residues 13-48 (SATE…KNLS), 50-85 (SANK…VLKG), 86-121 (KVDQ…IRAI), and 129-164 (TAEE…DEVL). 15 residues coordinate Ca(2+): aspartate 63, asparagine 65, aspartate 67, tyrosine 69, glutamate 74, aspartate 99, aspartate 101, asparagine 103, cysteine 105, glutamate 110, aspartate 142, asparagine 144, aspartate 146, glutamate 148, and glutamate 153.

Retina, in rod and cone outer segments, and pineal gland.

Its function is as follows. Stimulates retinal guanylyl cyclase when free calcium ions concentration is low and inhibits guanylyl cyclase when free calcium ions concentration is elevated. This Ca(2+)-sensitive regulation of retinal guanylyl cyclase is a key event in recovery of the dark state of rod photoreceptors following light exposure. In Gallus gallus (Chicken), this protein is Guanylyl cyclase-activating protein 1 (GUCA1A).